A 95-amino-acid polypeptide reads, in one-letter code: Aspartyl/glutamyl-tRNA(Asn/Gln) amidotransferase subunit C (95 aa).

It belongs to the GatC family. In terms of assembly, heterotrimer of A, B and C subunits.

The catalysed reaction is L-glutamyl-tRNA(Gln) + L-glutamine + ATP + H2O = L-glutaminyl-tRNA(Gln) + L-glutamate + ADP + phosphate + H(+). It catalyses the reaction L-aspartyl-tRNA(Asn) + L-glutamine + ATP + H2O = L-asparaginyl-tRNA(Asn) + L-glutamate + ADP + phosphate + 2 H(+). Functionally, allows the formation of correctly charged Asn-tRNA(Asn) or Gln-tRNA(Gln) through the transamidation of misacylated Asp-tRNA(Asn) or Glu-tRNA(Gln) in organisms which lack either or both of asparaginyl-tRNA or glutaminyl-tRNA synthetases. The reaction takes place in the presence of glutamine and ATP through an activated phospho-Asp-tRNA(Asn) or phospho-Glu-tRNA(Gln). In Pelodictyon phaeoclathratiforme (strain DSM 5477 / BU-1), this protein is Aspartyl/glutamyl-tRNA(Asn/Gln) amidotransferase subunit C.